A 216-amino-acid polypeptide reads, in one-letter code: Superoxide dismutase [Cu-Zn] 2, chloroplastic (216 aa).

The transit peptide at 1 to 62 (MAATNTILAF…APSKALTVVS (62 aa)) directs the protein to the chloroplast. 3 residues coordinate Cu cation: His-108, His-110, and His-125. Residues Cys-119 and Cys-208 are joined by a disulfide bond. 4 residues coordinate Zn(2+): His-125, His-133, His-142, and Asp-145. Residue His-182 participates in Cu cation binding.

This sequence belongs to the Cu-Zn superoxide dismutase family. Homotetramer. Cu cation serves as cofactor. The cofactor is Zn(2+). In terms of tissue distribution, expressed in leaves (at protein level). The spatial localization is regulated by miR398-mediated silencing. Mostly present in flowers, old rosette leaves and inflorescence, and, to a lower extent, in cauline leaves, stems and roots.

It is found in the plastid. Its subcellular location is the chloroplast. It catalyses the reaction 2 superoxide + 2 H(+) = H2O2 + O2. Its function is as follows. Destroys radicals which are normally produced within the cells and which are toxic to biological systems. Mediates tolerance to stress, including photo-oxidative stress. This Arabidopsis thaliana (Mouse-ear cress) protein is Superoxide dismutase [Cu-Zn] 2, chloroplastic (CSD2).